The sequence spans 468 residues: Purple acid phosphatase 10 (468 aa).

Residues 1-25 form the signal peptide; the sequence is MGRVRKSDFGSIVLVLCCVLNSLLC. N-linked (GlcNAc...) asparagine glycans are attached at residues Asn95 and Asn113. Fe cation is bound at residue Asp167. Residue Asn175 is glycosylated (N-linked (GlcNAc...) asparagine). Asp196 and Tyr199 together coordinate Fe cation. Position 196 (Asp196) interacts with Zn(2+). Asn233 lines the Zn(2+) pocket. Asn233 is a substrate binding site. Asn306 is a glycosylation site (N-linked (GlcNAc...) asparagine). A Zn(2+)-binding site is contributed by His318. The active-site Proton donor is His328. His355 is a Zn(2+) binding site. A substrate-binding site is contributed by 355 to 357; sequence HVH. Position 357 (His357) interacts with Fe cation. Residue Asn428 is glycosylated (N-linked (GlcNAc...) asparagine).

It belongs to the metallophosphoesterase superfamily. Purple acid phosphatase family. As to quaternary structure, homodimer; disulfide-linked. The cofactor is Fe cation. It depends on Zn(2+) as a cofactor. In terms of tissue distribution, expressed in roots, stems, leaves, flowers and siliques.

Its subcellular location is the secreted. The protein resides in the cytoplasm. The catalysed reaction is a phosphate monoester + H2O = an alcohol + phosphate. This chain is Purple acid phosphatase 10 (PAP10), found in Arabidopsis thaliana (Mouse-ear cress).